A 537-amino-acid chain; its full sequence is Phenylalanine--tRNA ligase beta subunit (537 aa).

Residues 268-343 (FNFRPYRLNL…KSYGIENVRE (76 aa)) enclose the B5 domain. Residues D321, D327, E330, and D331 each contribute to the Mg(2+) site.

The protein belongs to the phenylalanyl-tRNA synthetase beta subunit family. Type 2 subfamily. In terms of assembly, tetramer of two alpha and two beta subunits. It depends on Mg(2+) as a cofactor.

It is found in the cytoplasm. It catalyses the reaction tRNA(Phe) + L-phenylalanine + ATP = L-phenylalanyl-tRNA(Phe) + AMP + diphosphate + H(+). The protein is Phenylalanine--tRNA ligase beta subunit of Thermoplasma volcanium (strain ATCC 51530 / DSM 4299 / JCM 9571 / NBRC 15438 / GSS1).